Consider the following 3132-residue polypeptide: Toxin CdiA (3132 aa).

The signal signal peptide spans 1 to 32; sequence MHQPPVRFTYRLLSYLVSAIIAGQPLLPAVGA. Residues 36 to 322 form a two-partner system transport domain (TPS) region; the sequence is PQNGAGMDKA…AGGNLSVTGT (287 aa). Residues 351 to 1378 form an FHA-1 region; that stretch reads GELTAGQNAM…ITMNTAHLLN (1028 aa). Residues 1379–1635 form a receptor-binding domain (RBD) region; that stretch reads SWDAISASHE…LSLSGASVSS (257 aa). Residues 1636 to 1820 form a YP domain region; sequence YPLPSGNNGY…LSPEDITLHN (185 aa). Positions 1821-1859 are periplasmic FHA-1 repeat (pFR); that stretch reads GSVISGNNVQLAGGNITNSGSSINAQNDLLLDRTGSIDN. The FHA-2 stretch occupies residues 1930 to 2526; sequence RATDSLFMGA…QDSDRYDSRQ (597 aa). Disordered regions lie at residues 2195 to 2228 and 2456 to 2497; these read TGTG…STIG and AGIN…SGAQ. Polar residues-rich tracts occupy residues 2217-2228 and 2483-2497; these read GTTQSQSASTIG and VSLT…SGAQ. Residues 2862–2904 form a pre-toxin (PT) domain region; that stretch reads DNLSEQERQQISMLATIASGIAGGLVGNSTSAAGTGAQAGRNS. The VENN CT cleavage motif motif lies at 2905-2908; sequence VENN. A C-terminal effector domain (CT) region spans residues 2909-3121; the sequence is AMSGLEGFGT…IGTVTDYQIE (213 aa).

The protein in the N-terminal section; belongs to the CdiA toxin family. As to quaternary structure, probably interacts with cognate immunity protein CdiI. Expressed as 303 kDa protein which can be processed to 284 kDa and 195 kDa forms.

The protein resides in the secreted. It is found in the target cell. It localises to the target cell cytoplasm. Toxic component of a toxin-immunity protein module, which functions as a cellular contact-dependent growth inhibition (CDI) system. CDI modules allow bacteria to communicate with and inhibit the growth of closely related neighboring bacteria (target cell counts decrease 1000- to 10(5)-fold) in a contact-dependent fashion. Inhibitory cells must be in logarithmic (not stationary) phase to inhibit growth of their targets, but protein synthesis is not necessary. The presence of P or S but not type 1 pili protects the target cells against growth inhibition for this CDI. BamA on the outer membrane of target cells acts as a receptor for CdiA, while target cell multidrug efflux pump AcrB facilitates its transport into the cytoplasm. Outer membrane receptor function is dependent on extracellular loops of BamA. Cells undergoing CDI show a 2- to 5-fold reversible decrease in aerobic respiration, proton motive force and steady-state ATP levels, suggesting this CT module is an ionophore that disrupts the target cell's inner cell membrane. Growth recovery requires an energy source. Cells expressing this protein in the absence of CdiI initially form filaments, some of which contain multiple nucleoids, while others are devoid of nucleoids. CDI cells induce the phage shock response, but pspA is not required for recovery from CDI. CDI is neutralized by its cognate immunity protein CdiI, but not by non-cognate CdiI from other bacteria with different CDI systems. Plays a role in biofilm formation, a region N-terminal to residue 644 is implicated in this receptor-independent cell adhesion. In terms of biological role, the CdiA protein is thought to be exported from the cell through the central lumen of CdiB, the other half of its two-partner system (TPS). The TPS domain probably remains associated with CdiB while the FHA-1 domain forms an extended filament (33 nm long) with the receptor-binding domain (RBD) at its extremity; in the secretion arrested state the C-terminus of the RBD and YP domains form a hairpin-like structure as the FHA-2, PT and CT domains are periplasmic. The YP domain is probably responsible for this arrest at the point where it re-enters the host cell periplasm. Upon binding to a target cell outer membrane receptor (BamA for this CDI) a signal is transmitted to activate secretion. The filament becomes about 5 nm longer, the rest of CdiA is secreted and the FHA-2 domain becomes stably associated with the target cell's outer membrane where it facilitates entry of the toxic CT domain into the target cell periplasm. From there the toxic CT domain is cleaved and gains access to the target cell cytoplasm via an inner membrane protein (multidrug efflux pump AcrB for this CDI). This chain is Toxin CdiA, found in Escherichia coli.